Here is a 132-residue protein sequence, read N- to C-terminus: Small ribosomal subunit protein uS8 (132 aa).

The protein belongs to the universal ribosomal protein uS8 family. In terms of assembly, part of the 30S ribosomal subunit. Contacts proteins S5 and S12.

Functionally, one of the primary rRNA binding proteins, it binds directly to 16S rRNA central domain where it helps coordinate assembly of the platform of the 30S subunit. The sequence is that of Small ribosomal subunit protein uS8 from Clostridium perfringens (strain ATCC 13124 / DSM 756 / JCM 1290 / NCIMB 6125 / NCTC 8237 / Type A).